Reading from the N-terminus, the 191-residue chain is MIEIPSDLHKDLVPLAFLLGNWAGAGVHDFPGSEKCNFGQEVSFTHDGRDFLEYHSHTWVLDADGNKVRPLETESGFWRVDAARKVEAVMTRDDGVVEIWYGELAAKKPQIDLVTDAVARTAAAGPYSGGKRLYGYVKSDLMWVGEKQTPEVELRPYMSAHLKKVVTPEDVERWAKALPDDMPDDGIAFFK.

The short motif at 20 to 26 (GNWAGAG) is the GXWXGXG element.

This sequence belongs to the nitrobindin family.

This chain is Ferric nitrobindin-like protein, found in Streptomyces avermitilis (strain ATCC 31267 / DSM 46492 / JCM 5070 / NBRC 14893 / NCIMB 12804 / NRRL 8165 / MA-4680).